Reading from the N-terminus, the 143-residue chain is Transcriptional regulator MraZ (143 aa).

2 SpoVT-AbrB domains span residues 5–47 (EYEH…TLEE) and 76–119 (AVEV…DRAS).

This sequence belongs to the MraZ family. Forms oligomers.

It localises to the cytoplasm. Its subcellular location is the nucleoid. This chain is Transcriptional regulator MraZ, found in Staphylococcus carnosus (strain TM300).